A 189-amino-acid chain; its full sequence is ATP synthase subunit b (189 aa).

Residues 7 to 27 form a helical membrane-spanning segment; the sequence is LLIAALAVAPLAHAAEGGFVG.

It belongs to the ATPase B chain family. In terms of assembly, F-type ATPases have 2 components, F(1) - the catalytic core - and F(0) - the membrane proton channel. F(1) has five subunits: alpha(3), beta(3), gamma(1), delta(1), epsilon(1). F(0) has three main subunits: a(1), b(2) and c(10-14). The alpha and beta chains form an alternating ring which encloses part of the gamma chain. F(1) is attached to F(0) by a central stalk formed by the gamma and epsilon chains, while a peripheral stalk is formed by the delta and b chains.

The protein localises to the cell inner membrane. F(1)F(0) ATP synthase produces ATP from ADP in the presence of a proton or sodium gradient. F-type ATPases consist of two structural domains, F(1) containing the extramembraneous catalytic core and F(0) containing the membrane proton channel, linked together by a central stalk and a peripheral stalk. During catalysis, ATP synthesis in the catalytic domain of F(1) is coupled via a rotary mechanism of the central stalk subunits to proton translocation. Its function is as follows. Component of the F(0) channel, it forms part of the peripheral stalk, linking F(1) to F(0). The chain is ATP synthase subunit b from Hyphomonas neptunium (strain ATCC 15444).